Reading from the N-terminus, the 118-residue chain is uncharacterized protein (118 aa).

The disordered stretch occupies residues 49-80 (SKEEHTTSAANLHPRKKKRMPPRRAEKNKAPN). The span at 61–70 (HPRKKKRMPP) shows a compositional bias: basic residues.

This is an uncharacterized protein from Saccharomyces cerevisiae (strain ATCC 204508 / S288c) (Baker's yeast).